The following is a 1230-amino-acid chain: ATP-dependent helicase/nuclease subunit A (1230 aa).

A UvrD-like helicase ATP-binding domain is found at 4 to 480 (RNWTGPQEAA…IDLSHNFRSR (477 aa)). 25-32 (AGAGSGKT) contacts ATP. The region spanning 517-799 (AQLEGSGPPV…RIMSIHQAKG (283 aa)) is the UvrD-like helicase C-terminal domain. Residues 535–554 (TSVGRDTAGTADDEPDRSDE) form a disordered region. A compositionally biased stretch (acidic residues) spans 545 to 554 (ADDEPDRSDE).

Belongs to the helicase family. AddA subfamily. In terms of assembly, heterodimer of AddA and AddB/RexB. It depends on Mg(2+) as a cofactor.

The catalysed reaction is Couples ATP hydrolysis with the unwinding of duplex DNA by translocating in the 3'-5' direction.. It carries out the reaction ATP + H2O = ADP + phosphate + H(+). Functionally, the heterodimer acts as both an ATP-dependent DNA helicase and an ATP-dependent, dual-direction single-stranded exonuclease. Recognizes the chi site generating a DNA molecule suitable for the initiation of homologous recombination. The AddA nuclease domain is required for chi fragment generation; this subunit has the helicase and 3' -&gt; 5' nuclease activities. The polypeptide is ATP-dependent helicase/nuclease subunit A (Desulforudis audaxviator (strain MP104C)).